The chain runs to 778 residues: Serine/threonine-protein kinase BRSK1 (778 aa).

The segment covering 1–12 (MSSGSKEGGGGS) has biased composition (gly residues). Positions 1–29 (MSSGSKEGGGGSPAYHLPHPHPHPPQHAQ) are disordered. The Protein kinase domain occupies 34 to 285 (YRLEKTLGKG…LEQIQKHPWY (252 aa)). ATP is bound by residues 40 to 48 (LGKGQTGLV) and K63. Catalysis depends on D156, which acts as the Proton acceptor. A Phosphothreonine; by LKB1 modification is found at T189. A UBA domain is found at 314–356 (ELDPDVLESMASLGCFRDRERLHRELRSEEENQEKMIYYLLLD). The span at 362–383 (PSCEDQDLPPRNDVDPPRKRVD) shows a compositional bias: basic and acidic residues. The disordered stretch occupies residues 362–548 (PSCEDQDLPP…SPGGGVGGAA (187 aa)). A phosphoserine mark is found at S399, S443, S447, and S450. Low complexity predominate over residues 430–457 (SRSVSGASTGLSSSPLSSPRSPVFSFSP). 4 positions are modified to omega-N-methylarginine: R466, R481, R484, and R498. A compositionally biased stretch (pro residues) spans 491–508 (QPPPPSARSTPLPGPPGS). S508 bears the Phosphoserine mark. A compositionally biased stretch (low complexity) spans 509-533 (PRSSGGTPLHSPLHTPRASPTGTPG). R525 is subject to Omega-N-methylarginine. Phosphothreonine is present on residues T529 and T535. R550 is modified (omega-N-methylarginine). Residues 560-588 (FLGSPRFHRRKMQVPTAEEMSSLTPESSP) form a disordered region. T583 is modified (phosphothreonine). Phosphoserine occurs at positions 586, 587, and 601. Residues 719-778 (QPSVQALADEKNGAQTRPAGTPPRSLQPPPGRSDPDLSSSPRRGPPKDKKLLATNGTPLP) form a disordered region.

It belongs to the protein kinase superfamily. CAMK Ser/Thr protein kinase family. SNF1 subfamily. Mg(2+) is required as a cofactor. Post-translationally, phosphorylated at Thr-189 by STK11/LKB1 in complex with STE20-related adapter-alpha (STRADA) pseudo kinase and CAB39. Not phosphorylated at Thr-189 by CaMKK2. In contrast, it is phosphorylated and activated by CaMKK1. May be inactivated via dephosphorylation of Thr-189 by PP2C. Present in the gray matter of the brain and spinal cord (at protein level). Expressed in the nervous system, distributed within the brain and spinal cord of embryonic and postnatal animals.

The protein localises to the cytoplasm. Its subcellular location is the nucleus. It localises to the cytoskeleton. It is found in the microtubule organizing center. The protein resides in the centrosome. The protein localises to the synapse. Its subcellular location is the presynaptic active zone. It localises to the cytoplasmic vesicle. It is found in the secretory vesicle. The protein resides in the synaptic vesicle. The catalysed reaction is L-seryl-[protein] + ATP = O-phospho-L-seryl-[protein] + ADP + H(+). It catalyses the reaction L-threonyl-[protein] + ATP = O-phospho-L-threonyl-[protein] + ADP + H(+). The enzyme catalyses L-seryl-[tau protein] + ATP = O-phospho-L-seryl-[tau protein] + ADP + H(+). It carries out the reaction L-threonyl-[tau protein] + ATP = O-phospho-L-threonyl-[tau protein] + ADP + H(+). With respect to regulation, activated by phosphorylation on Thr-189 by STK11/LKB1. Functionally, serine/threonine-protein kinase that plays a key role in polarization of neurons and centrosome duplication. Phosphorylates CDC25B, CDC25C, MAPT/TAU, RIMS1, TUBG1, TUBG2 and WEE1. Following phosphorylation and activation by STK11/LKB1, acts as a key regulator of polarization of cortical neurons, probably by mediating phosphorylation of microtubule-associated proteins such as MAPT/TAU at 'Thr-504' and 'Ser-554'. Also regulates neuron polarization by mediating phosphorylation of WEE1 at 'Ser-642' in postmitotic neurons, leading to down-regulate WEE1 activity in polarized neurons. In neurons, localizes to synaptic vesicles and plays a role in neurotransmitter release, possibly by phosphorylating RIMS1. Also acts as a positive regulator of centrosome duplication by mediating phosphorylation of gamma-tubulin (TUBG1 and TUBG2) at 'Ser-131', leading to translocation of gamma-tubulin and its associated proteins to the centrosome. Involved in the UV-induced DNA damage checkpoint response, probably by inhibiting CDK1 activity through phosphorylation and activation of WEE1, and inhibition of CDC25B and CDC25C. In Mus musculus (Mouse), this protein is Serine/threonine-protein kinase BRSK1 (Brsk1).